We begin with the raw amino-acid sequence, 147 residues long: 3-dehydroquinate dehydratase (147 aa).

Residue tyrosine 26 is the Proton acceptor of the active site. Positions 77, 83, and 90 each coordinate substrate. Histidine 103 (proton donor) is an active-site residue. Substrate-binding positions include 104 to 105 (LS) and arginine 114.

It belongs to the type-II 3-dehydroquinase family. In terms of assembly, homododecamer.

It carries out the reaction 3-dehydroquinate = 3-dehydroshikimate + H2O. Its pathway is metabolic intermediate biosynthesis; chorismate biosynthesis; chorismate from D-erythrose 4-phosphate and phosphoenolpyruvate: step 3/7. Its function is as follows. Catalyzes a trans-dehydration via an enolate intermediate. The sequence is that of 3-dehydroquinate dehydratase from Proteus mirabilis (strain HI4320).